The sequence spans 475 residues: Adenylyl cyclase-associated protein 1 (475 aa).

An N-acetylalanine modification is found at Ala-2. Phosphotyrosine is present on Tyr-31. Ser-34 carries the phosphoserine modification. An N6-acetyllysine modification is found at Lys-81. Disordered regions lie at residues 216-255 and 278-318; these read ELSG…ASRS and MKTH…TKKE. The span at 218–228 shows a compositional bias: low complexity; that stretch reads SGLPSGPSAGS. Residues 229-242 show a composition bias toward pro residues; sequence GPPPPPPGPPPPPV. Low complexity predominate over residues 243 to 255; it reads STSSGSDESASRS. Position 287 is an N6-methyllysine (Lys-287). Phosphoserine is present on residues Ser-290, Ser-295, and Ser-301. The segment covering 300–312 has biased composition (pro residues); that stretch reads FSAPKPQTSPSPK. Position 307 is a phosphothreonine (Thr-307). A phosphoserine mark is found at Ser-308 and Ser-310. The 141-residue stretch at 313-453 folds into the C-CAP/cofactor C-like domain; it reads PATKKEPAVL…EGGDFNEFPV (141 aa). Lys-348 participates in a covalent cross-link: Glycyl lysine isopeptide (Lys-Gly) (interchain with G-Cter in SUMO1).

This sequence belongs to the CAP family. Homodimer. Binds actin monomers.

It localises to the cell membrane. In terms of biological role, directly regulates filament dynamics and has been implicated in a number of complex developmental and morphological processes, including mRNA localization and the establishment of cell polarity. The polypeptide is Adenylyl cyclase-associated protein 1 (CAP1) (Macaca fascicularis (Crab-eating macaque)).